A 750-amino-acid polypeptide reads, in one-letter code: Polyribonucleotide nucleotidyltransferase (750 aa).

Mg(2+)-binding residues include Asp523 and Asp529. The region spanning 589 to 648 (PRVTSISIPVDKIGEVIGPKGKMINSITEETGAEITIEDDGTIYVGAADGPSAEAAIDKI) is the KH domain. The region spanning 660 to 729 (GERFLGTVVK…SRGKISLVVV (70 aa)) is the S1 motif domain.

The protein belongs to the polyribonucleotide nucleotidyltransferase family. Mg(2+) serves as cofactor.

It localises to the cytoplasm. The enzyme catalyses RNA(n+1) + phosphate = RNA(n) + a ribonucleoside 5'-diphosphate. Involved in mRNA degradation. Catalyzes the phosphorolysis of single-stranded polyribonucleotides processively in the 3'- to 5'-direction. This Saccharopolyspora erythraea (strain ATCC 11635 / DSM 40517 / JCM 4748 / NBRC 13426 / NCIMB 8594 / NRRL 2338) protein is Polyribonucleotide nucleotidyltransferase.